A 121-amino-acid chain; its full sequence is Small ribosomal subunit protein uS13 (121 aa).

The tract at residues 93-121 (RGLPVRGQNTKNNARTRKGPRRTVANKKK) is disordered. The span at 106-121 (ARTRKGPRRTVANKKK) shows a compositional bias: basic residues.

This sequence belongs to the universal ribosomal protein uS13 family. In terms of assembly, part of the 30S ribosomal subunit. Forms a loose heterodimer with protein S19. Forms two bridges to the 50S subunit in the 70S ribosome.

Functionally, located at the top of the head of the 30S subunit, it contacts several helices of the 16S rRNA. In the 70S ribosome it contacts the 23S rRNA (bridge B1a) and protein L5 of the 50S subunit (bridge B1b), connecting the 2 subunits; these bridges are implicated in subunit movement. Contacts the tRNAs in the A and P-sites. The chain is Small ribosomal subunit protein uS13 from Bacillus pumilus (strain SAFR-032).